Consider the following 97-residue polypeptide: Small ribosomal subunit protein bS6 (97 aa).

Belongs to the bacterial ribosomal protein bS6 family.

In terms of biological role, binds together with bS18 to 16S ribosomal RNA. The polypeptide is Small ribosomal subunit protein bS6 (Bifidobacterium longum (strain NCC 2705)).